The primary structure comprises 403 residues: Argininosuccinate synthase (403 aa).

9–17 (AYSGGLDTS) contacts ATP. Y86 provides a ligand contact to L-citrulline. Position 116 (G116) interacts with ATP. The L-aspartate site is built by T118, N122, and D123. N122 lines the L-citrulline pocket. Residues R126, S174, E259, and Y271 each coordinate L-citrulline.

This sequence belongs to the argininosuccinate synthase family. Type 1 subfamily. In terms of assembly, homotetramer.

The protein resides in the cytoplasm. The catalysed reaction is L-citrulline + L-aspartate + ATP = 2-(N(omega)-L-arginino)succinate + AMP + diphosphate + H(+). It participates in amino-acid biosynthesis; L-arginine biosynthesis; L-arginine from L-ornithine and carbamoyl phosphate: step 2/3. The chain is Argininosuccinate synthase from Ligilactobacillus salivarius (strain UCC118) (Lactobacillus salivarius).